The following is an 827-amino-acid chain: Villin-1 (827 aa).

The tract at residues 1–126 (MTKLSAQVKG…IRKGGVASGM (126 aa)) is necessary for homodimerization. Residues 1-734 (MTKLSAQVKG…YEDLKAELGN (734 aa)) are core. The Gelsolin-like 1 repeat unit spans residues 27 to 76 (MQMVPVPSNSFGSFFDGDCYVIQAIHKTGSNLSYDIHYWIGQASSQDEQG). 2 LPA/PIP2-binding site regions span residues 112 to 119 (KKGIVIRK) and 138 to 146 (RLLHVKGKR). 2 Gelsolin-like repeats span residues 148–188 (VVAG…MERL) and 265–309 (VVVR…QEKK). Phosphoserine is present on Ser366. Gelsolin-like repeat units lie at residues 407-457 (NLEL…DEIT), 528-568 (TKAF…DERE), and 631-672 (FLAT…DEKK). At Ser735 the chain carries Phosphoserine. Residues 735–827 (SGDWSQITAE…QNLKKEKGLF (93 aa)) form a headpiece region. In terms of domain architecture, HP spans 761-827 (SGPLPIFPLE…QNLKKEKGLF (67 aa)). An LPA/PIP2-binding site 3 region spans residues 816–824 (KQQNLKKEK).

The protein belongs to the villin/gelsolin family. In terms of assembly, monomer. Homodimer; homodimerization is necessary for actin-bundling. Associates with F-actin; phosphorylation at tyrosine residues decreases the association with F-actin. Interacts (phosphorylated at C-terminus tyrosine phosphorylation sites) with PLCG1 (via the SH2 domains). Interacts (phosphorylated form) with PLCG1; the interaction is enhanced by hepatocyte growth factor (HGF). Post-translationally, phosphorylated on tyrosine residues by SRC. The unphosphorylated form increases the initial rate of actin-nucleating activity, whereas the tyrosine-phosphorylated form inhibits actin-nucleating activity, enhances actin-bundling activity and enhances actin-severing activity by reducing high Ca(2+) requirements. The tyrosine-phosphorylated form does not regulate actin-capping activity. Tyrosine phosphorylation is essential for cell migration: tyrosine phosphorylation sites in the N-terminus half regulate actin reorganization and cell morphology, whereas tyrosine phosphorylation sites in the C-terminus half regulate cell migration via interaction with PLCG1. Tyrosine phosphorylation is induced by epidermal growth factor (EGF) and stimulates cell migration.

The protein resides in the cytoplasm. It is found in the cytoskeleton. The protein localises to the cell projection. Its subcellular location is the lamellipodium. It localises to the ruffle. The protein resides in the microvillus. It is found in the filopodium tip. The protein localises to the filopodium. Its function is as follows. Epithelial cell-specific Ca(2+)-regulated actin-modifying protein that modulates the reorganization of microvillar actin filaments. Plays a role in the actin nucleation, actin filament bundle assembly, actin filament capping and severing. Binds phosphatidylinositol 4,5-bisphosphate (PIP2) and lysophosphatidic acid (LPA); binds LPA with higher affinity than PIP2. Binding to LPA increases its phosphorylation by SRC and inhibits all actin-modifying activities. Binding to PIP2 inhibits actin-capping and -severing activities but enhances actin-bundling activity. Regulates the intestinal epithelial cell morphology, cell invasion, cell migration and apoptosis. Protects against apoptosis induced by dextran sodium sulfate (DSS) in the gastrointestinal epithelium. Appears to regulate cell death by maintaining mitochondrial integrity. Enhances hepatocyte growth factor (HGF)-induced epithelial cell motility, chemotaxis and wound repair. This chain is Villin-1 (VIL1), found in Bos taurus (Bovine).